Consider the following 334-residue polypeptide: Tryptophan--tRNA ligase (334 aa).

Residues 11–13 and 19–20 contribute to the ATP site; these read QPS and GN. Residues 12-20 carry the 'HIGH' region motif; the sequence is PSGELTIGN. Asp-135 serves as a coordination point for L-tryptophan. ATP is bound by residues 147-149, Val-186, and 195-199; these read GED and KMSKS. A 'KMSKS' region motif is present at residues 195–199; sequence KMSKS.

The protein belongs to the class-I aminoacyl-tRNA synthetase family. In terms of assembly, homodimer.

The protein resides in the cytoplasm. The catalysed reaction is tRNA(Trp) + L-tryptophan + ATP = L-tryptophyl-tRNA(Trp) + AMP + diphosphate + H(+). Its function is as follows. Catalyzes the attachment of tryptophan to tRNA(Trp). In Klebsiella aerogenes (Enterobacter aerogenes), this protein is Tryptophan--tRNA ligase.